Reading from the N-terminus, the 998-residue chain is Probable protein kinase DDB_G0277539 (998 aa).

Disordered stretches follow at residues 1–34, 65–207, 265–284, 316–367, 380–420, and 435–489; these read MDFP…DFDQ, CEDQ…TNEF, INNN…FSSS, SNGS…NYSS, ERTN…PNSI, and RLQS…NNNN. The segment covering 23-32 has biased composition (acidic residues); that stretch reads YDDDDDDDDF. Over residues 70–139 the composition is skewed to low complexity; the sequence is QQQQQQSSSP…NNNNNNNNNN (70 aa). Residues 140–150 show a composition bias toward basic residues; that stretch reads SHHHHLRKGRR. The segment covering 166–177 has biased composition (polar residues); it reads ASLSSTKTNMFP. Low complexity-rich tracts occupy residues 184–203 and 265–274; these read SSPS…QSQQ and INNNYNNNNN. The segment covering 316–328 has biased composition (polar residues); the sequence is SNGSYNKGNTFPS. Basic and acidic residues predominate over residues 330-340; sequence EVKRVRPDQRA. Composition is skewed to low complexity over residues 393–415 and 450–489; these read NVNN…NNNN and NNNN…NNNN. Positions 508-849 constitute a Protein kinase domain; the sequence is FQELDLIGEG…AEQLLEHPLI (342 aa). Residues 514-522 and Lys-537 contribute to the ATP site; that span reads IGEGSFGHV. The active-site Proton acceptor is the Asp-631. The Mg(2+) site is built by Asn-636 and Glu-677.

This sequence belongs to the protein kinase superfamily. Ser/Thr protein kinase family. WEE1 subfamily.

It carries out the reaction L-seryl-[protein] + ATP = O-phospho-L-seryl-[protein] + ADP + H(+). The enzyme catalyses L-threonyl-[protein] + ATP = O-phospho-L-threonyl-[protein] + ADP + H(+). This is Probable protein kinase DDB_G0277539 from Dictyostelium discoideum (Social amoeba).